The sequence spans 637 residues: ATP-dependent zinc metalloprotease FtsH (637 aa).

The Cytoplasmic portion of the chain corresponds to 1–44 (MAKHSQHSSPPRKLFDTLNDLWQRAKSEAGLSAEGPEGTRRRNN). The helical transmembrane segment at 45–65 (LILYLLLVLSTLYLLNGYQTL) threads the bilayer. Residues 66–141 (RNEEIPYSEF…TVRYGSNWFS (76 aa)) are Periplasmic-facing. A helical membrane pass occupies residues 142–162 (SLIFNWIVPIVLLTLFWTWMA). The Cytoplasmic portion of the chain corresponds to 163 to 637 (RRMTGGRGFL…VKAVIREAAS (475 aa)). 231 to 238 (GPPGTGKT) provides a ligand contact to ATP. Residue H454 coordinates Zn(2+). E455 is an active-site residue. Positions 458 and 531 each coordinate Zn(2+).

The protein in the central section; belongs to the AAA ATPase family. It in the C-terminal section; belongs to the peptidase M41 family. As to quaternary structure, homohexamer. Zn(2+) is required as a cofactor.

The protein resides in the cell inner membrane. Its function is as follows. Acts as a processive, ATP-dependent zinc metallopeptidase for both cytoplasmic and membrane proteins. Plays a role in the quality control of integral membrane proteins. The protein is ATP-dependent zinc metalloprotease FtsH of Methylococcus capsulatus (strain ATCC 33009 / NCIMB 11132 / Bath).